The sequence spans 310 residues: Protein BIG GRAIN 1 (310 aa).

Residues 77–140 (SYRARAPGPH…EKKAKKPGAS (64 aa)) are disordered. Low complexity predominate over residues 90–106 (SSSSECSSYGGFSSSEA).

Belongs to the BIG GRAIN 1 (BG1) plant protein family. In terms of tissue distribution, mostly expressed in the vascular tissues of leaves, culms and young panicles, especially in hulls.

It localises to the cell membrane. In terms of biological role, involved in auxin transport. Positive regulator of the auxin signaling pathway involved in gravitropism, plant growth and grain development. This Oryza sativa subsp. japonica (Rice) protein is Protein BIG GRAIN 1.